The primary structure comprises 101 residues: Cell cycle protein GpsB (101 aa).

Positions 34-71 (LDMVIKDYETFNQEIEKLQQENLHLSKQLEEAVEQGKR) form a coiled coil.

The protein belongs to the GpsB family. Forms polymers through the coiled coil domains. Interacts with PBP1, MreC and EzrA.

The protein resides in the cytoplasm. Functionally, divisome component that associates with the complex late in its assembly, after the Z-ring is formed, and is dependent on DivIC and PBP2B for its recruitment to the divisome. Together with EzrA, is a key component of the system that regulates PBP1 localization during cell cycle progression. Its main role could be the removal of PBP1 from the cell pole after pole maturation is completed. Also contributes to the recruitment of PBP1 to the division complex. Not essential for septum formation. This Bacillus pumilus (strain SAFR-032) protein is Cell cycle protein GpsB.